Here is a 176-residue protein sequence, read N- to C-terminus: Large ribosomal subunit protein uL6 (176 aa).

This sequence belongs to the universal ribosomal protein uL6 family. In terms of assembly, part of the 50S ribosomal subunit.

Functionally, this protein binds to the 23S rRNA, and is important in its secondary structure. It is located near the subunit interface in the base of the L7/L12 stalk, and near the tRNA binding site of the peptidyltransferase center. This chain is Large ribosomal subunit protein uL6, found in Lactobacillus helveticus (strain DPC 4571).